Consider the following 1058-residue polypeptide: Carbamoyl phosphate synthase large chain (1058 aa).

A carboxyphosphate synthetic domain region spans residues 1–401 (MPKRKDIQKI…SLLKACRSLE (401 aa)). Positions 129, 169, 175, 176, 208, 210, 215, 241, 242, 243, 284, and 298 each coordinate ATP. The ATP-grasp 1 domain maps to 133 to 327 (KQLMQELDQP…IAKLAAKIAV (195 aa)). Mg(2+) contacts are provided by Q284, E298, and N300. Positions 284, 298, and 300 each coordinate Mn(2+). Residues 402-546 (IGVCHNEMTS…YSTYELENES (145 aa)) form an oligomerization domain region. The interval 547-929 (VQSNKESILV…ALYKAFEANN (383 aa)) is carbamoyl phosphate synthetic domain. The region spanning 671–861 (EKALKELGIP…MAQIATKLIL (191 aa)) is the ATP-grasp 2 domain. ATP contacts are provided by R707, S746, I748, E752, G777, V778, H779, S780, Q820, and E832. Residues Q820, E832, and N834 each coordinate Mg(2+). 3 residues coordinate Mn(2+): Q820, E832, and N834. Positions 930 to 1058 (SHLSEFGQIV…ESRCFNIEAI (129 aa)) constitute an MGS-like domain. The segment at 930–1058 (SHLSEFGQIV…ESRCFNIEAI (129 aa)) is allosteric domain.

This sequence belongs to the CarB family. Composed of two chains; the small (or glutamine) chain promotes the hydrolysis of glutamine to ammonia, which is used by the large (or ammonia) chain to synthesize carbamoyl phosphate. Tetramer of heterodimers (alpha,beta)4. Mg(2+) is required as a cofactor. Mn(2+) serves as cofactor.

It carries out the reaction hydrogencarbonate + L-glutamine + 2 ATP + H2O = carbamoyl phosphate + L-glutamate + 2 ADP + phosphate + 2 H(+). The catalysed reaction is hydrogencarbonate + NH4(+) + 2 ATP = carbamoyl phosphate + 2 ADP + phosphate + 2 H(+). It functions in the pathway amino-acid biosynthesis; L-arginine biosynthesis; carbamoyl phosphate from bicarbonate: step 1/1. It participates in pyrimidine metabolism; UMP biosynthesis via de novo pathway; (S)-dihydroorotate from bicarbonate: step 1/3. Large subunit of the glutamine-dependent carbamoyl phosphate synthetase (CPSase). CPSase catalyzes the formation of carbamoyl phosphate from the ammonia moiety of glutamine, carbonate, and phosphate donated by ATP, constituting the first step of 2 biosynthetic pathways, one leading to arginine and/or urea and the other to pyrimidine nucleotides. The large subunit (synthetase) binds the substrates ammonia (free or transferred from glutamine from the small subunit), hydrogencarbonate and ATP and carries out an ATP-coupled ligase reaction, activating hydrogencarbonate by forming carboxy phosphate which reacts with ammonia to form carbamoyl phosphate. The sequence is that of Carbamoyl phosphate synthase large chain from Streptococcus pyogenes serotype M3 (strain ATCC BAA-595 / MGAS315).